The sequence spans 298 residues: 3'-5' exonuclease crn-4 (298 aa).

The Exonuclease domain occupies 12–192; that stretch reads LILDFETTSD…DDCLNIATIL (181 aa). Mg(2+) contacts are provided by D15, E17, and D184. C210, C260, C263, and C270 together coordinate Zn(2+).

In terms of assembly, homodimer (via C-terminus). Interacts with crn-5; interaction promotes the DNase activity of crn-4. Interacts with cps-6, crn-1 and cyn-13. The cofactor is Mg(2+).

Exonuclease activity is inhibited in vitro by pontacyl violet 6R (PV6R), p-chloromercuriphenyl sulfonate (PCMPS), 5,5'-dithiobis(2-nitrobenzoic acid) (DTNB), aurintricarboxylic acid (ATA), 2-morpholin-4-ylethanesulfonate (MES), 4-[(4,6-dichloro-1,3,5-triazin-2-yl)amino]-2-(3-hydroxy-6-oxoxanthen-9-yl)benzoic acid (DR396) and fmoc-d-Cha-OH (FDCO). Interaction with ssRNA is reduced in vitro by PV6R. Possesses 3'-&gt;5' exoribonuclease activity in digestion of DNA and RNA. Cleaves nucleic acid substrates with efficiencies in the following order: single-stranded RNA (ssRNA) &gt; double-stranded DNA (dsDNA) &gt; single-stranded DNA (ssDNA). Involved in apoptotic DNA degradation. The sequence is that of 3'-5' exonuclease crn-4 (crn-4) from Caenorhabditis elegans.